The sequence spans 455 residues: Dihydrolipoyllysine-residue succinyltransferase component of 2-oxoglutarate dehydrogenase complex, mitochondrial (455 aa).

The N-terminal 68 residues, methionine 1–lysine 68, are a transit peptide targeting the mitochondrion. Residues valine 71–arginine 145 enclose the Lipoyl-binding domain. Serine 82 bears the Phosphoserine mark. Lysine 111 carries the post-translational modification N6-lipoyllysine. Residues lysine 153–alanine 173 show a composition bias toward low complexity. Residues lysine 153–glutamate 214 form a disordered region. The residue at position 155 (lysine 155) is an N6-acetyllysine. Pro residues predominate over residues valine 174 to proline 195. The interval leucine 221–leucine 453 is catalytic. N6-acetyllysine occurs at positions 269, 274, 275, 279, and 309. Residues histidine 426 and aspartate 430 contribute to the active site.

The protein belongs to the 2-oxoacid dehydrogenase family. As to quaternary structure, the 2-oxoglutarate dehydrogenase complex is composed of OGDH (2-oxoglutarate dehydrogenase; E1), DLST (dihydrolipoamide succinyltransferase; E2), DLD (dihydrolipoamide dehydrogenase; E3) and the assembly factor KGD4. It contains multiple copies of the three enzymatic components (E1, E2 and E3). In the nucleus, the 2-oxoglutarate dehydrogenase complex associates with KAT2A. Interacts with ABHD11; this interaction maintains the functional lipoylation of the 2-oxoglutarate dehydrogenase complex. Requires (R)-lipoate as cofactor.

The protein localises to the mitochondrion matrix. It is found in the nucleus. The catalysed reaction is N(6)-[(R)-dihydrolipoyl]-L-lysyl-[protein] + succinyl-CoA = N(6)-[(R)-S(8)-succinyldihydrolipoyl]-L-lysyl-[protein] + CoA. It functions in the pathway amino-acid degradation; L-lysine degradation via saccharopine pathway; glutaryl-CoA from L-lysine: step 6/6. It participates in carbohydrate metabolism; tricarboxylic acid cycle. Dihydrolipoamide succinyltransferase (E2) component of the 2-oxoglutarate dehydrogenase complex. The 2-oxoglutarate dehydrogenase complex catalyzes the overall conversion of 2-oxoglutarate to succinyl-CoA and CO(2). The 2-oxoglutarate dehydrogenase complex is mainly active in the mitochondrion. A fraction of the 2-oxoglutarate dehydrogenase complex also localizes in the nucleus and is required for lysine succinylation of histones: associates with KAT2A on chromatin and provides succinyl-CoA to histone succinyltransferase KAT2A. The chain is Dihydrolipoyllysine-residue succinyltransferase component of 2-oxoglutarate dehydrogenase complex, mitochondrial from Sus scrofa (Pig).